We begin with the raw amino-acid sequence, 228 residues long: Ribosomal RNA large subunit methyltransferase E (228 aa).

Positions 76, 78, 99, 115, and 139 each coordinate S-adenosyl-L-methionine. Catalysis depends on K179, which acts as the Proton acceptor.

It belongs to the class I-like SAM-binding methyltransferase superfamily. RNA methyltransferase RlmE family.

The protein localises to the cytoplasm. The catalysed reaction is uridine(2552) in 23S rRNA + S-adenosyl-L-methionine = 2'-O-methyluridine(2552) in 23S rRNA + S-adenosyl-L-homocysteine + H(+). Specifically methylates the uridine in position 2552 of 23S rRNA at the 2'-O position of the ribose in the fully assembled 50S ribosomal subunit. The chain is Ribosomal RNA large subunit methyltransferase E from Nitrobacter hamburgensis (strain DSM 10229 / NCIMB 13809 / X14).